The sequence spans 63 residues: Large ribosomal subunit protein uL29 (63 aa).

The protein belongs to the universal ribosomal protein uL29 family.

The sequence is that of Large ribosomal subunit protein uL29 from Haemophilus ducreyi (strain 35000HP / ATCC 700724).